A 284-amino-acid chain; its full sequence is RNase adapter protein RapZ (284 aa).

8 to 15 (GRSGSGKS) contacts ATP. 56–59 (DVRN) contacts GTP. The segment at 266 to 284 (RSRGKNVQSRHRTLEKRKQ) is RNA-binding.

The protein belongs to the RapZ-like family. RapZ subfamily. Homotrimer.

Functionally, modulates the synthesis of GlmS, by affecting the processing and stability of the regulatory small RNA GlmZ. When glucosamine-6-phosphate (GlcN6P) concentrations are high in the cell, RapZ binds GlmZ and targets it to cleavage by RNase E. Consequently, GlmZ is inactivated and unable to activate GlmS synthesis. Under low GlcN6P concentrations, RapZ is sequestered and inactivated by an other regulatory small RNA, GlmY, preventing GlmZ degradation and leading to synthesis of GlmS. This Serratia proteamaculans (strain 568) protein is RNase adapter protein RapZ.